The following is a 419-amino-acid chain: MFTSVAQANAAVIEQIRRARPHWLDVQPASSLISELNEGKTLLHAGPPMRWQEMTGPMKGACVGACLFEGWAKDEAQALAILEQGEVNFIPCHHVNAVGPMGGITSASMPMLVVENVTDGNRAYCNLNEGIGKVMRFGAYGEDVLTRHRWMRDVLMPVLSAALGRMERGIDLTAMMAQGITMGDEFHQRNIASSALLMRALAPQIARLDHDKQHIAEVMDFLSVTDQFFLNLAMAYCKAAMDAGAMIRAGSIVTAMTRNGNMFGIRVSGLGERWFTAPVNTPQGLFFTGFSQEQANPDMGDSAITETFGIGGAAMIAAPGVTRFVGAGGMEAARAVSEEMAEIYLERNMQLQIPSWDFQGACLGLDIRRVVETGITPLINTGIAHKEAGIGQIGAGTVRAPLACFEQALEALAESMGIG.

This sequence belongs to the AllG family. In terms of assembly, the OXTCase is composed of 3 subunits, AllF, AllG and AllH. It depends on Mg(2+) as a cofactor.

It catalyses the reaction oxamate + carbamoyl phosphate = N-carbamoyl-2-oxoglycine + phosphate. Its pathway is nitrogen metabolism; (S)-allantoin degradation. Functionally, component of a carbamoyltransferase involved in the anaerobic nitrogen utilization via the assimilation of allantoin. Catalyzes the conversion of oxalurate (N-carbamoyl-2-oxoglycine) to oxamate and carbamoyl phosphate. The protein is Oxamate carbamoyltransferase subunit AllG of Escherichia coli (strain K12).